The sequence spans 437 residues: Sorting nexin-30 (437 aa).

2 disordered regions span residues 1–44 (MAGG…PDLL) and 54–73 (LILP…SSSS). T38 carries the phosphothreonine modification. S40 is modified (phosphoserine). Residues 63-73 (AGTSSPASSSS) show a composition bias toward low complexity. One can recognise a PX domain in the interval 89 to 210 (RDLFVIVDDP…IFLTAKDLNA (122 aa)). Residues R132, Q134, K162, and R176 each contribute to the a 1,2-diacyl-sn-glycero-3-phospho-(1D-myo-inositol-3-phosphate) site. Positions 234–437 (KLRTRPLEFA…PLLQEKQEAK (204 aa)) constitute a BAR domain.

It belongs to the sorting nexin family. In terms of assembly, heterodimer; heterodimerizes with SNX4.

Its subcellular location is the early endosome membrane. In terms of biological role, involved in the regulation of endocytosis and in several stages of intracellular trafficking. Together with SNX4, involved in autophagosome assembly. This is Sorting nexin-30 from Homo sapiens (Human).